An 821-amino-acid polypeptide reads, in one-letter code: Dapper homolog 1 (821 aa).

A coiled-coil region spans residues 88-136; sequence LNTEEKLLEENILLLRKQLNCLRRRDAGLINQLQELDRQISDLRLDTET. 4 disordered regions span residues 288–312, 386–432, 564–615, and 627–655; these read SKPG…SSWH, QDAS…STTN, NSAS…KTKR, and ERHT…VLAK. A compositionally biased stretch (low complexity) spans 388 to 400; that stretch reads ASATSTEPSTASP. The span at 401–432 shows a compositional bias: polar residues; that stretch reads QRQWSAESKGGTPQNGAYLSSSQPQNSYSTTN. Basic residues-rich tracts occupy residues 584-593, 601-615, and 639-649; these read DKHRTGSRRT, HLHK…KTKR, and AQRHHGHHRHH. The PDZ-binding motif lies at 818-821; it reads MTTV.

This sequence belongs to the dapper family. In terms of assembly, interacts with dvl2.

It localises to the cytoplasm. Functionally, involved in regulation of intracellular signaling pathways during development. Specifically thought to play a role in canonical and/or non-canonical Wnt signaling pathways through interaction with DSH (Dishevelled) family proteins. Binds to dvl2 and may regulate the degradation of ctnnb1/beta-catenin, thereby modulating the transcriptional activation of target genes of the Wnt signaling pathway. Seems to activate the canonical Wnt signaling pathway. In Danio rerio (Zebrafish), this protein is Dapper homolog 1 (dact1).